A 500-amino-acid chain; its full sequence is Metal transporter Nramp3.1 (500 aa).

Transmembrane regions (helical) follow at residues leucine 51 to leucine 71, alanine 79 to valine 99, methionine 128 to glycine 148, valine 160 to leucine 180, leucine 188 to alanine 208, alanine 234 to valine 254, alanine 280 to phenylalanine 300, tyrosine 322 to glutamine 342, alanine 370 to threonine 390, tryptophan 401 to valine 421, valine 439 to phenylalanine 459, and valine 467 to isoleucine 487.

Belongs to the NRAMP (TC 2.A.55) family. As to expression, expressed in roots, stems, buds and leaves.

The protein resides in the golgi apparatus. It is found in the trans-Golgi network membrane. The catalysed reaction is Mn(2+)(in) = Mn(2+)(out). The enzyme catalyses Fe(2+)(in) = Fe(2+)(out). Divalent metal transporter. Can transport manganese (Mn) and iron (Fe). Involved in the control of cell-to-cell transport of manganese (Mn) between organs and tissues to monitor Mn homeostasis. The protein is Metal transporter Nramp3.1 of Populus trichocarpa (Western balsam poplar).